The primary structure comprises 360 residues: Mannose-1-phosphate guanyltransferase beta-A (360 aa).

This sequence belongs to the transferase hexapeptide repeat family.

The enzyme catalyses alpha-D-mannose 1-phosphate + GTP + H(+) = GDP-alpha-D-mannose + diphosphate. It participates in nucleotide-sugar biosynthesis; GDP-alpha-D-mannose biosynthesis; GDP-alpha-D-mannose from alpha-D-mannose 1-phosphate (GTP route): step 1/1. This chain is Mannose-1-phosphate guanyltransferase beta-A (gmppb-a), found in Xenopus laevis (African clawed frog).